Consider the following 312-residue polypeptide: Acetylglutamate kinase (312 aa).

Substrate-binding positions include 77–78, Arg-99, and Asn-192; that span reads GG.

It belongs to the acetylglutamate kinase family. ArgB subfamily.

The protein resides in the cytoplasm. It carries out the reaction N-acetyl-L-glutamate + ATP = N-acetyl-L-glutamyl 5-phosphate + ADP. The protein operates within amino-acid biosynthesis; L-arginine biosynthesis; N(2)-acetyl-L-ornithine from L-glutamate: step 2/4. Its function is as follows. Catalyzes the ATP-dependent phosphorylation of N-acetyl-L-glutamate. The protein is Acetylglutamate kinase of Synechococcus sp. (strain JA-2-3B'a(2-13)) (Cyanobacteria bacterium Yellowstone B-Prime).